We begin with the raw amino-acid sequence, 253 residues long: Ditrans,polycis-undecaprenyl-diphosphate synthase ((2E,6E)-farnesyl-diphosphate specific) (253 aa).

D25 is a catalytic residue. D25 is a binding site for Mg(2+). Residues 26-29 (GNGR), W30, R38, H42, and 70-72 (SSE) contribute to the substrate site. The active-site Proton acceptor is N73. Positions 74, 76, and 193 each coordinate substrate. Position 198 (H198) interacts with Mg(2+). 199 to 201 (RIS) is a binding site for substrate. E212 contacts Mg(2+).

The protein belongs to the UPP synthase family. Homodimer. Requires Mg(2+) as cofactor.

It carries out the reaction 8 isopentenyl diphosphate + (2E,6E)-farnesyl diphosphate = di-trans,octa-cis-undecaprenyl diphosphate + 8 diphosphate. Functionally, catalyzes the sequential condensation of isopentenyl diphosphate (IPP) with (2E,6E)-farnesyl diphosphate (E,E-FPP) to yield (2Z,6Z,10Z,14Z,18Z,22Z,26Z,30Z,34E,38E)-undecaprenyl diphosphate (di-trans,octa-cis-UPP). UPP is the precursor of glycosyl carrier lipid in the biosynthesis of bacterial cell wall polysaccharide components such as peptidoglycan and lipopolysaccharide. The polypeptide is Ditrans,polycis-undecaprenyl-diphosphate synthase ((2E,6E)-farnesyl-diphosphate specific) (Pectobacterium atrosepticum (strain SCRI 1043 / ATCC BAA-672) (Erwinia carotovora subsp. atroseptica)).